The primary structure comprises 103 residues: Large ribosomal subunit protein bL21 (103 aa).

The protein belongs to the bacterial ribosomal protein bL21 family. In terms of assembly, part of the 50S ribosomal subunit. Contacts protein L20.

In terms of biological role, this protein binds to 23S rRNA in the presence of protein L20. The chain is Large ribosomal subunit protein bL21 from Psychrobacter sp. (strain PRwf-1).